Reading from the N-terminus, the 354-residue chain is Guanine nucleotide-binding protein G(o) subunit alpha (354 aa).

Glycine 2 carries the N-myristoyl glycine lipid modification. The S-palmitoyl cysteine moiety is linked to residue cysteine 3. The G-alpha domain maps to 32 to 354 (KDVKLLLLGA…ANNLRGCGLY (323 aa)). The tract at residues 35-48 (KLLLLGAGESGKST) is G1 motif. Glutamate 43, lysine 46, serine 47, threonine 48, serine 152, leucine 176, arginine 177, threonine 178, and arginine 179 together coordinate GTP. Mg(2+) is bound at residue serine 47. Residues 174–182 (DILRTRVKT) are G2 motif. Arginine 179 bears the ADP-ribosylarginine; by cholera toxin mark. Threonine 182 provides a ligand contact to Mg(2+). Positions 197–206 (FRLFDVGGQR) are G3 motif. Glutamine 205 carries the 5-glutamyl histamine modification. Positions 266–273 (ILFLNKKD) are G4 motif. Residues asparagine 270, aspartate 273, and cysteine 325 each coordinate GTP. The segment at 324–329 (TCATDT) is G5 motif. Residue cysteine 351 is the site of S-palmitoyl cysteine attachment. The residue at position 351 (cysteine 351) is an ADP-ribosylcysteine; by pertussis toxin.

Belongs to the G-alpha family. G(i/o/t/z) subfamily. G proteins are composed of 3 units; alpha, beta and gamma. The alpha chain contains the guanine nucleotide binding site. Forms a complex with GNB1 and GNG3. Interacts with RGS14. Interacts with RGS16. Interacts with RGS19. Interacts (when palmitoylated) with ADGRG3. In terms of processing, histaminylated at Gln-205 residues by TGM2. Palmitoylated at Cys-351, leading to binding to ADGRG3.

The protein resides in the cell membrane. The protein localises to the membrane. It catalyses the reaction GTP + H2O = GDP + phosphate + H(+). The GTPase activity is promoted by GTPAse activators, such as RGS14, RGS16 and RGS19. In terms of biological role, guanine nucleotide-binding proteins (G proteins) function as transducers downstream of G protein-coupled receptors (GPCRs) in numerous signaling cascades. The alpha chain contains the guanine nucleotide binding site and alternates between an active, GTP-bound state and an inactive, GDP-bound state. Signaling by an activated GPCR promotes GDP release and GTP binding. The alpha subunit has a low GTPase activity that converts bound GTP to GDP, thereby terminating the signal. Both GDP release and GTP hydrolysis are modulated by numerous regulatory proteins. Signaling is mediated via effector proteins, such as adenylate cyclase. Inhibits adenylate cyclase activity, leading to decreased intracellular cAMP levels. In Homo sapiens (Human), this protein is Guanine nucleotide-binding protein G(o) subunit alpha (GNAO1).